Here is a 459-residue protein sequence, read N- to C-terminus: Sperm microtubule associated protein 2-like (459 aa).

Residues 1–138 (MEEGDFSGSS…QEDGKDDLFP (138 aa)) are disordered. The segment covering 21–30 (TTTTTETRTT) has biased composition (low complexity). Positions 47 to 63 (NGDEAEAVGEEGQEEDY) are enriched in acidic residues. Basic and acidic residues predominate over residues 64–73 (EGSKTHKSHE). The span at 77 to 87 (SFRSHNSSDPP) shows a compositional bias: polar residues. Composition is skewed to basic and acidic residues over residues 91–112 (KASD…KTSD) and 127–136 (ERQEDGKDDL). THEG repeat units lie at residues 172 to 190 (KKCF…PKKQ), 212 to 231 (AALK…PRLV), 258 to 277 (PALV…PNKF), 291 to 310 (TTRY…AKGT), 327 to 346 (STLS…PRIK), 367 to 386 (AALL…SKRV), 403 to 422 (AATH…PHTR), and 440 to 459 (SALK…PIVR).

The polypeptide is Sperm microtubule associated protein 2-like (Mus musculus (Mouse)).